The following is a 389-amino-acid chain: Chalcone synthase E (389 aa).

Residue Cys-164 is part of the active site.

Belongs to the thiolase-like superfamily. Chalcone/stilbene synthases family.

It carries out the reaction (E)-4-coumaroyl-CoA + 3 malonyl-CoA + 3 H(+) = 2',4,4',6'-tetrahydroxychalcone + 3 CO2 + 4 CoA. Its pathway is secondary metabolite biosynthesis; flavonoid biosynthesis. In terms of biological role, the primary product of this enzyme is 4,2',4',6'-tetrahydroxychalcone (also termed naringenin-chalcone or chalcone) which can under specific conditions spontaneously isomerize into naringenin. The chain is Chalcone synthase E (CHSE) from Ipomoea nil (Japanese morning glory).